We begin with the raw amino-acid sequence, 306 residues long: Pantothenate kinase (306 aa).

90 to 97 serves as a coordination point for ATP; that stretch reads GSVAVGKS.

It belongs to the prokaryotic pantothenate kinase family.

It localises to the cytoplasm. It carries out the reaction (R)-pantothenate + ATP = (R)-4'-phosphopantothenate + ADP + H(+). The protein operates within cofactor biosynthesis; coenzyme A biosynthesis; CoA from (R)-pantothenate: step 1/5. The protein is Pantothenate kinase (coaA) of Listeria innocua serovar 6a (strain ATCC BAA-680 / CLIP 11262).